We begin with the raw amino-acid sequence, 85 residues long: MKVTLIAILTCAAVLVLHTTAAEEFEAESQLMEVGMPDTELAAVDEERLFECSVSCEIEKEGNKDCKKKKCKGGWKCKFNMCVKV.

A signal peptide spans 1 to 22 (MKVTLIAILTCAAVLVLHTTAA). A propeptide spanning residues 23-48 (EEFEAESQLMEVGMPDTELAAVDEER) is cleaved from the precursor. 3 disulfide bridges follow: cysteine 52/cysteine 66, cysteine 56/cysteine 77, and cysteine 71/cysteine 82.

The protein belongs to the neurotoxin 12 (Hwtx-2) family. 02 (Hwtx-2) subfamily. Monomer. In terms of tissue distribution, expressed by the venom gland.

The protein localises to the secreted. Functionally, neurotoxin active on both insects and mammals. The chain is U4-theraphotoxin-Hhn1a from Cyriopagopus hainanus (Chinese bird spider).